The primary structure comprises 172 residues: Peptide methionine sulfoxide reductase MsrA (172 aa).

Residue C12 is part of the active site.

Belongs to the MsrA Met sulfoxide reductase family.

The catalysed reaction is L-methionyl-[protein] + [thioredoxin]-disulfide + H2O = L-methionyl-(S)-S-oxide-[protein] + [thioredoxin]-dithiol. It carries out the reaction [thioredoxin]-disulfide + L-methionine + H2O = L-methionine (S)-S-oxide + [thioredoxin]-dithiol. Has an important function as a repair enzyme for proteins that have been inactivated by oxidation. Catalyzes the reversible oxidation-reduction of methionine sulfoxide in proteins to methionine. This Ligilactobacillus salivarius (strain UCC118) (Lactobacillus salivarius) protein is Peptide methionine sulfoxide reductase MsrA.